An 85-amino-acid polypeptide reads, in one-letter code: Conotoxin Mi15a (85 aa).

Residues 1–23 (MEKLTVLILVATVLLTIQVLGQS) form the signal peptide. The propeptide occupies 24 to 49 (DRDKHLKRRPKQYATKRLSARMRGHR). A Pyrrolidone carboxylic acid modification is found at glutamine 50.

Belongs to the conotoxin O2 superfamily. Post-translationally, contains 4 disulfide bonds. In terms of tissue distribution, expressed by the venom duct.

Its subcellular location is the secreted. The protein is Conotoxin Mi15a of Conus miles (Soldier cone).